Consider the following 358-residue polypeptide: Fructose-bisphosphate aldolase 1, cytoplasmic (358 aa).

Residue arginine 39 coordinates substrate. Residue glutamate 183 is the Proton acceptor of the active site. Catalysis depends on lysine 225, which acts as the Schiff-base intermediate with dihydroxyacetone-P. Residues serine 266–glycine 268 and arginine 298 contribute to the substrate site.

Belongs to the class I fructose-bisphosphate aldolase family. In terms of assembly, homotetramer. As to expression, expressed in callus.

Its subcellular location is the cytoplasm. It localises to the cytosol. It carries out the reaction beta-D-fructose 1,6-bisphosphate = D-glyceraldehyde 3-phosphate + dihydroxyacetone phosphate. It functions in the pathway carbohydrate degradation; glycolysis; D-glyceraldehyde 3-phosphate and glycerone phosphate from D-glucose: step 4/4. In terms of biological role, fructose-bisphosphate aldolase that plays a key role in glycolysis and gluconeogenesis. Involved in gibberellin-mediated root growth. May be regulated by CDPK13. Associates with vacuolar proton ATPase (V-ATPase) and may regulate the V-ATPase-mediated control of root cell elongation. The sequence is that of Fructose-bisphosphate aldolase 1, cytoplasmic from Oryza sativa subsp. japonica (Rice).